The following is a 254-amino-acid chain: Putative biopolymer transport protein ExbB-like 1 (254 aa).

A run of 3 helical transmembrane segments spans residues 39–59 (GGVVMFPLLLLSILALTTAFE), 141–161 (LETIIALAPLLGLLGTVTGLI), and 185–205 (IGEALITTAAGMMVAIFALLV).

This sequence belongs to the ExbB/TolQ family.

It is found in the cell inner membrane. Functionally, involved in the TonB-dependent energy-dependent transport of various receptor-bound substrates. Protects ExbD from proteolytic degradation and functionally stabilizes TonB. In Synechocystis sp. (strain ATCC 27184 / PCC 6803 / Kazusa), this protein is Putative biopolymer transport protein ExbB-like 1.